Reading from the N-terminus, the 514-residue chain is uncharacterized protein (514 aa).

The segment covering 1–15 (MSSPRGASSMSSRSP) has biased composition (low complexity). A disordered region spans residues 1–22 (MSSPRGASSMSSRSPVNLEPES).

This is an uncharacterized protein from Ictaluridae (bullhead catfishes).